Here is a 518-residue protein sequence, read N- to C-terminus: MANCVRCCCWLLVLMLMALAITAAVVFVRYKNGEGVFPFPGVPGAVDHKYADALAVALQFFQVQKSGKLVNNTIHWRGDSALDDGKEAGIDLSKGMYDAGDHMKFGFPMAFTATMLSWSVLEYGDAMRAADQRDSAIDALNWIMDYLVNAHPSDDVLYIQVGDPKADHKCWERPEKMKEKRPLTKITPKSPGSDVAAETAAAMAAASLVYKTINKTYSSSLLDHGERLFAFADKHRGSYTRTFPELSAFYNSTTYQDELLWAASWLYHATGNHSYLAYATGKNKDFADLGNPRYFSWDDKRAGTEVLLSRVSFFASQGSDVAQDDVLGMYKQTADAVMCILLPDSETAAFRTEGGLLYVAEWNSLQHPVASAFLAAVYSDYMQSSGKTELSCSGQGFSPADLRKFAKSQADYLLGSNPMKISYLVGYGDRYPEKVHHRGASIPEDVDTGCDGHKWLETSKPNPNVATGALVGGPYKNDSFVDERDNVMQNEATTYNSALVAGLLSALVSTSSLARSLS.

At 1-35 (MANCVRCCCWLLVLMLMALAITAAVVFVRYKNGEG) the chain is on the cytoplasmic side. Residues 36-56 (VFPFPGVPGAVDHKYADALAV) form a helical membrane-spanning segment. At 57–518 (ALQFFQVQKS…STSSLARSLS (462 aa)) the chain is on the extracellular side. N-linked (GlcNAc...) asparagine glycosylation occurs at Asn-71. The active-site Nucleophile is Asp-101. 3 N-linked (GlcNAc...) asparagine glycosylation sites follow: Asn-214, Asn-251, and Asn-272. Residue His-436 is part of the active site. A glycan (N-linked (GlcNAc...) asparagine) is linked at Asn-477. Catalysis depends on residues Asp-482 and Glu-491.

The protein belongs to the glycosyl hydrolase 9 (cellulase E) family.

Its subcellular location is the membrane. It catalyses the reaction Endohydrolysis of (1-&gt;4)-beta-D-glucosidic linkages in cellulose, lichenin and cereal beta-D-glucans.. This chain is Endoglucanase 18, found in Oryza sativa subsp. japonica (Rice).